A 139-amino-acid polypeptide reads, in one-letter code: Metallothiol transferase FosB (139 aa).

A VOC domain is found at 4 to 119 (GINHITYSVS…DGHKLELHTG (116 aa)). 3 residues coordinate Mg(2+): H7, H66, and E115. E115 functions as the Proton donor/acceptor in the catalytic mechanism.

It belongs to the fosfomycin resistance protein family. FosB subfamily. In terms of assembly, homodimer. Requires Mg(2+) as cofactor.

The protein resides in the cytoplasm. Metallothiol transferase which confers resistance to fosfomycin by catalyzing the addition of a thiol cofactor to fosfomycin. L-cysteine is probably the physiological thiol donor. The protein is Metallothiol transferase FosB of Staphylococcus epidermidis.